Here is a 223-residue protein sequence, read N- to C-terminus: Kinetochore protein Spc25 (223 aa).

Positions 51–119 form a coiled coil; that stretch reads RHQRKVGKLQ…NEIMERIQTL (69 aa).

The protein belongs to the SPC25 family. As to quaternary structure, component of the Ndc80 complex, which is composed of Ndc80, Nuf2 and Spc25.

It is found in the nucleus. The protein localises to the chromosome. Its subcellular location is the centromere. It localises to the kinetochore. Functionally, acts as a component of the essential kinetochore-associated Ndc80 complex, which is required for chromosome segregation and spindle checkpoint activity during meiosis and mitosis. Required for kinetochore integrity and the organization of stable microtubule binding sites in the outer plate of the kinetochore. Participates in SAC signaling that responds specifically to disruptions in spindle microtubule dynamics. The NDC80 complex synergistically enhances the affinity of the SKA1 complex for microtubules and may allow the NDC80 complex to track depolymerizing microtubules. The protein is Kinetochore protein Spc25 of Drosophila teissieri (Fruit fly).